Here is a 269-residue protein sequence, read N- to C-terminus: Ribosomal RNA small subunit methyltransferase A (269 aa).

Residues Asn11, Leu13, Gly37, Glu57, Asp85, and Asn104 each coordinate S-adenosyl-L-methionine.

It belongs to the class I-like SAM-binding methyltransferase superfamily. rRNA adenine N(6)-methyltransferase family. RsmA subfamily.

The protein resides in the cytoplasm. The enzyme catalyses adenosine(1518)/adenosine(1519) in 16S rRNA + 4 S-adenosyl-L-methionine = N(6)-dimethyladenosine(1518)/N(6)-dimethyladenosine(1519) in 16S rRNA + 4 S-adenosyl-L-homocysteine + 4 H(+). In terms of biological role, specifically dimethylates two adjacent adenosines (A1518 and A1519) in the loop of a conserved hairpin near the 3'-end of 16S rRNA in the 30S particle. May play a critical role in biogenesis of 30S subunits. The polypeptide is Ribosomal RNA small subunit methyltransferase A (Campylobacter hominis (strain ATCC BAA-381 / DSM 21671 / CCUG 45161 / LMG 19568 / NCTC 13146 / CH001A)).